A 457-amino-acid polypeptide reads, in one-letter code: tRNA modification GTPase MnmE (457 aa).

3 residues coordinate (6S)-5-formyl-5,6,7,8-tetrahydrofolate: Arg25, Glu87, and Arg126. Residues 223-377 enclose the TrmE-type G domain; sequence GISTAIIGRP…IEERINNLFF (155 aa). Asn233 contributes to the K(+) binding site. Residues 233–238, 252–258, and 277–280 each bind GTP; these read NVGKSS, TDIAGTT, and DTAG. Ser237 serves as a coordination point for Mg(2+). Positions 252, 254, and 257 each coordinate K(+). Thr258 lines the Mg(2+) pocket. Lys457 contributes to the (6S)-5-formyl-5,6,7,8-tetrahydrofolate binding site.

Belongs to the TRAFAC class TrmE-Era-EngA-EngB-Septin-like GTPase superfamily. TrmE GTPase family. As to quaternary structure, homodimer. Heterotetramer of two MnmE and two MnmG subunits. The cofactor is K(+).

The protein localises to the cytoplasm. Exhibits a very high intrinsic GTPase hydrolysis rate. Involved in the addition of a carboxymethylaminomethyl (cmnm) group at the wobble position (U34) of certain tRNAs, forming tRNA-cmnm(5)s(2)U34. This chain is tRNA modification GTPase MnmE, found in Streptococcus pneumoniae (strain Hungary19A-6).